The sequence spans 40 residues: Fibrinolytic protease (40 aa).

The Peptidase S1 domain maps to 1 to 40 (IVGGNEVTPHAYPWQVGLFIDDMYFCGGSISVTLTGWGKP).

This sequence belongs to the peptidase S1 family.

The protein localises to the secreted. Its subcellular location is the extracellular space. Functionally, serine protease with fibrinolytic activity. The polypeptide is Fibrinolytic protease (Euphausia superba (Antarctic krill)).